Consider the following 347-residue polypeptide: 8-amino-8-demethylriboflavin N,N-dimethyltransferase (347 aa).

Residues Asp-209 and 235–237 (GDF) contribute to the S-adenosyl-L-methionine site.

It belongs to the class I-like SAM-binding methyltransferase superfamily. Cation-independent O-methyltransferase family. As to quaternary structure, homodimer.

The catalysed reaction is 8-amino-8-demethylriboflavin + 2 S-adenosyl-L-methionine = roseoflavin + 2 S-adenosyl-L-homocysteine + 2 H(+). It participates in antibiotic biosynthesis. Functionally, catalyzes the S-adenosyl methionine-dependent conversion of 8-amino-8-demethyl-D-riboflavin (AF) into 8-methylamino-8-demethyl-D-riboflavin (MAF) and roseoflavin (RoF), the last two steps in the biosynthesis of the antibiotic roseoflavin. The polypeptide is 8-amino-8-demethylriboflavin N,N-dimethyltransferase (Streptomyces davaonensis (strain DSM 101723 / JCM 4913 / KCC S-0913 / 768)).